Here is a 365-residue protein sequence, read N- to C-terminus: Alanine racemase (365 aa).

The Proton acceptor; specific for D-alanine role is filled by Lys36. Lys36 carries the post-translational modification N6-(pyridoxal phosphate)lysine. Residue Arg132 coordinates substrate. Residue Tyr257 is the Proton acceptor; specific for L-alanine of the active site. Residue Met305 participates in substrate binding.

The protein belongs to the alanine racemase family. The cofactor is pyridoxal 5'-phosphate.

The catalysed reaction is L-alanine = D-alanine. It participates in amino-acid biosynthesis; D-alanine biosynthesis; D-alanine from L-alanine: step 1/1. Catalyzes the interconversion of L-alanine and D-alanine. May also act on other amino acids. The polypeptide is Alanine racemase (alr) (Xylella fastidiosa (strain Temecula1 / ATCC 700964)).